The sequence spans 251 residues: uncharacterized protein (251 aa).

The N-terminal stretch at Met1 to Ala18 is a signal peptide.

This sequence belongs to the MlaA family.

This is an uncharacterized protein from Rickettsia conorii (strain ATCC VR-613 / Malish 7).